The sequence spans 146 residues: Hemoglobin subunit beta (146 aa).

The 145-residue stretch at 2–146 folds into the Globin domain; it reads HWSAEEKQLI…VAHALARKYH (145 aa). Residues H63 and H92 each coordinate heme b.

It belongs to the globin family. In terms of assembly, heterotetramer of two alpha chains and two beta chains. In terms of tissue distribution, red blood cells.

Its function is as follows. Involved in oxygen transport from the lung to the various peripheral tissues. The chain is Hemoglobin subunit beta (HBB) from Anser indicus (Bar-headed goose).